The following is a 610-amino-acid chain: Scarecrow-like protein 11 (610 aa).

3 disordered regions span residues Asn32–Val54, Gln98–Lys159, and Gln186–Asn220. 2 stretches are compositionally biased toward low complexity: residues Ser41–Pro52 and Gln99–Asp119. Polar residues-rich tracts occupy residues Pro123–Glu137 and Gly209–Asn220. One can recognise a GRAS domain in the interval Lys215–Lys598. Positions Val222–Pro283 are leucine repeat I (LRI). Residues Tyr302–Gly367 are VHIID. The VHIID signature appears at Leu333 to Asp337. The interval Glu383 to Glu415 is leucine repeat II (LRII). The segment at Thr424 to Ser520 is PFYRE. Positions Ser523–Lys598 are SAW.

This sequence belongs to the GRAS family. In terms of tissue distribution, highly expressed in roots and at lower levels in leaves and sepals. Expressed in siliques.

It localises to the nucleus. Its function is as follows. Probable transcription factor involved in plant development. This chain is Scarecrow-like protein 11 (SCL11), found in Arabidopsis thaliana (Mouse-ear cress).